The following is a 517-amino-acid chain: Crotonobetaine/carnitine--CoA ligase (517 aa).

Belongs to the ATP-dependent AMP-binding enzyme family.

It carries out the reaction 4-(trimethylamino)butanoate + ATP + CoA = 4-(trimethylamino)butanoyl-CoA + AMP + diphosphate. The enzyme catalyses crotonobetaine + ATP + CoA = crotonobetainyl-CoA + AMP + diphosphate. It catalyses the reaction (R)-carnitine + ATP + CoA = (R)-carnitinyl-CoA + AMP + diphosphate. The protein operates within amine and polyamine metabolism; carnitine metabolism. Catalyzes the transfer of CoA to carnitine, generating the initial carnitinyl-CoA needed for the CaiB reaction cycle. Also has activity toward crotonobetaine and gamma-butyrobetaine. In Salmonella arizonae (strain ATCC BAA-731 / CDC346-86 / RSK2980), this protein is Crotonobetaine/carnitine--CoA ligase.